The following is a 444-amino-acid chain: Adenylyltransferase and sulfurtransferase UBA4 (444 aa).

Residues G81, D102, 109 to 113 (SNLHR), K126, and 170 to 171 (DT) contribute to the ATP site. Residues C212 and C215 each coordinate Zn(2+). The Glycyl thioester intermediate; for adenylyltransferase activity role is filled by C229. C290 and C293 together coordinate Zn(2+). Residues 343–442 (KTKPYVLLDV…YIDEINPSLP (100 aa)) form the Rhodanese domain. Catalysis depends on C401, which acts as the Cysteine persulfide intermediate; for sulfurtransferase activity.

This sequence in the N-terminal section; belongs to the HesA/MoeB/ThiF family. UBA4 subfamily. Zn(2+) serves as cofactor.

The protein resides in the cytoplasm. It localises to the cytosol. It participates in tRNA modification; 5-methoxycarbonylmethyl-2-thiouridine-tRNA biosynthesis. In terms of biological role, plays a central role in 2-thiolation of mcm(5)S(2)U at tRNA wobble positions of cytosolic tRNA(Lys), tRNA(Glu) and tRNA(Gln). Acts by mediating the C-terminal thiocarboxylation of sulfur carrier URM1. Its N-terminus first activates URM1 as acyl-adenylate (-COAMP), then the persulfide sulfur on the catalytic cysteine is transferred to URM1 to form thiocarboxylation (-COSH) of its C-terminus. The reaction probably involves hydrogen sulfide that is generated from the persulfide intermediate and that acts as a nucleophile towards URM1. Subsequently, a transient disulfide bond is formed. Does not use thiosulfate as sulfur donor; NFS1 probably acting as a sulfur donor for thiocarboxylation reactions. Prior mcm(5) tRNA modification by the elongator complex is required for 2-thiolation. May also be involved in protein urmylation. The polypeptide is Adenylyltransferase and sulfurtransferase UBA4 (Kluyveromyces lactis (strain ATCC 8585 / CBS 2359 / DSM 70799 / NBRC 1267 / NRRL Y-1140 / WM37) (Yeast)).